The primary structure comprises 456 residues: Putative gluconeogenesis factor (456 aa).

Belongs to the gluconeogenesis factor family.

The protein localises to the cytoplasm. Functionally, required for morphogenesis under gluconeogenic growth conditions. The polypeptide is Putative gluconeogenesis factor (Nostoc sp. (strain PCC 7120 / SAG 25.82 / UTEX 2576)).